The chain runs to 345 residues: Tryptophan--tRNA ligase (345 aa).

ATP contacts are provided by residues 12-14 (RPT) and 20-21 (GH). Residues 13–21 (PTGKLHLGH) carry the 'HIGH' region motif. An L-tryptophan-binding site is contributed by Asp-144. Residues 156–158 (GKD), Leu-194, and 202–206 (KMSKS) each bind ATP. The 'KMSKS' region motif lies at 202–206 (KMSKS).

This sequence belongs to the class-I aminoacyl-tRNA synthetase family. In terms of assembly, homodimer.

Its subcellular location is the cytoplasm. It carries out the reaction tRNA(Trp) + L-tryptophan + ATP = L-tryptophyl-tRNA(Trp) + AMP + diphosphate + H(+). In terms of biological role, catalyzes the attachment of tryptophan to tRNA(Trp). The sequence is that of Tryptophan--tRNA ligase from Chlamydia caviae (strain ATCC VR-813 / DSM 19441 / 03DC25 / GPIC) (Chlamydophila caviae).